The chain runs to 38 residues: Photosystem I reaction center subunit IX (38 aa).

Residues 4 to 24 (FLTTAPVVAAIWFTLTAGILI) form a helical membrane-spanning segment.

It belongs to the PsaJ family.

The protein localises to the cellular thylakoid membrane. Its function is as follows. May help in the organization of the PsaE and PsaF subunits. In Parasynechococcus marenigrum (strain WH8102), this protein is Photosystem I reaction center subunit IX.